Reading from the N-terminus, the 554-residue chain is Rab GTPase-binding effector protein 2 (554 aa).

The span at Met1–Gln15 shows a compositional bias: low complexity. Disordered stretches follow at residues Met1–Arg29, Ile167–Ser250, and Glu375–Leu395. Residues Gln15–Gln173 are a coiled coil. The span at Glu16–Arg29 shows a compositional bias: basic and acidic residues. 4 positions are modified to phosphoserine: Ser176, Ser180, Ser187, and Ser191. Residues Asp274–Asp512 are a coiled coil. Residues Leu377–Glu386 are compositionally biased toward polar residues.

Belongs to the rabaptin family. As to quaternary structure, heterodimer with RABGEF1. The dimer binds RAB5A that has been activated by GTP-binding. Interacts with SDCCAG8; this interaction is important for ciliogenesis regulation. Interacts with RAB4A; this interaction may mediate VEGFR2 cell surface expression.

Its subcellular location is the cytoplasm. The protein resides in the early endosome. It localises to the cytoskeleton. It is found in the microtubule organizing center. The protein localises to the centrosome. Its subcellular location is the cilium basal body. Functionally, plays a role in membrane trafficking and in homotypic early endosome fusion. Participates in arteriogenesis by regulating vascular endothelial growth factor receptor 2/VEGFR2 cell surface expression and endosomal trafficking. By interacting with SDCCAG8, localizes to centrosomes and plays a critical role in ciliogenesis. This chain is Rab GTPase-binding effector protein 2 (Rabep2), found in Rattus norvegicus (Rat).